The sequence spans 438 residues: UPF0229 protein R01398 (438 aa).

The interval 55-107 is disordered; the sequence is PARGVNEPAFQPDSNSGERRHVLPGNREFAAGDRIPKRGSGGGAGNAGAGTGQ. Residues 93–105 are compositionally biased toward gly residues; the sequence is GSGGGAGNAGAGT.

Belongs to the UPF0229 family.

This is UPF0229 protein R01398 from Rhizobium meliloti (strain 1021) (Ensifer meliloti).